A 145-amino-acid polypeptide reads, in one-letter code: FAD synthase (145 aa).

ATP contacts are provided by residues threonine 5–phenylalanine 6, histidine 10–histidine 13, aspartate 92, and tyrosine 119.

The protein belongs to the archaeal FAD synthase family. Homodimer. The cofactor is a divalent metal cation.

It catalyses the reaction FMN + ATP + H(+) = FAD + diphosphate. Its pathway is cofactor biosynthesis; FAD biosynthesis; FAD from FMN: step 1/1. In terms of biological role, catalyzes the transfer of the AMP portion of ATP to flavin mononucleotide (FMN) to produce flavin adenine dinucleotide (FAD) coenzyme. The chain is FAD synthase from Methanothermus fervidus (strain ATCC 43054 / DSM 2088 / JCM 10308 / V24 S).